The primary structure comprises 283 residues: 2-heptyl-4(1H)-quinolone synthase subunit PqsB (283 aa).

The protein belongs to the thiolase-like superfamily. FabH family. As to quaternary structure, forms a tight complex with PqsC.

The protein resides in the cytoplasm. Its activity is regulated as follows. Activity of the complex is inhibited by 2-aminoacetophenone (2-AA). Required for the biosynthesis of the quorum-sensing signaling molecules 2-heptyl-4(1H)-quinolone (HHQ) and 2-heptyl-3-hydroxy-4(1H)-quinolone (Pseudomonas quinolone signal or PQS), which are important for biofilm formation and virulence. The PqsC/PqsB complex catalyzes the condensation of 2-aminobenzoylacetate (2-ABA) and octanoyl-CoA to form HHQ. PqsB, together with PqsC, catalyzes the coupling of 2-ABA with the octanoate group, leading to decarboxylation and dehydration, and resulting in closure of the quinoline ring. PqsB is probably required for the proper folding of PqsC rather than for a direct enzymatic role in the process. The chain is 2-heptyl-4(1H)-quinolone synthase subunit PqsB from Pseudomonas aeruginosa (strain ATCC 15692 / DSM 22644 / CIP 104116 / JCM 14847 / LMG 12228 / 1C / PRS 101 / PAO1).